The sequence spans 518 residues: Envelope protein (518 aa).

An N-terminal signal peptide occupies residues 1–31 (MSVNRSSIKSLLMVFMIVSSSLLAPVGGAAA). Residues 32 to 485 (DEFRTPAASD…IEDREPEAGG (454 aa)) lie on the Extracellular side of the membrane. N-linked (GlcNAc...) (hybrid) asparagine; by host glycosylation occurs at asparagine 213. A helical membrane pass occupies residues 486–506 (FFGSGSTDTMLVGLLALAGVL). The Cytoplasmic segment spans residues 507 to 518 (LLAQSNNRGGRR).

In terms of processing, N-glycosylated by a pentasaccharide comprising glucose, glucuronic acid and a terminal 5-N-formyl-legionaminic acid residue.

Its subcellular location is the virion membrane. Envelope protein that may play a role in host-cell attachment and viral genome entry. In Halorubrum sp. PV6 (HRPV-1), this protein is Envelope protein.